Here is a 71-residue protein sequence, read N- to C-terminus: DNA-directed RNA polymerase subunit omega (71 aa).

It belongs to the RNA polymerase subunit omega family. In terms of assembly, the RNAP catalytic core consists of 2 alpha, 1 beta, 1 beta' and 1 omega subunit. When a sigma factor is associated with the core the holoenzyme is formed, which can initiate transcription.

The catalysed reaction is RNA(n) + a ribonucleoside 5'-triphosphate = RNA(n+1) + diphosphate. Promotes RNA polymerase assembly. Latches the N- and C-terminal regions of the beta' subunit thereby facilitating its interaction with the beta and alpha subunits. The sequence is that of DNA-directed RNA polymerase subunit omega from Alkaliphilus oremlandii (strain OhILAs) (Clostridium oremlandii (strain OhILAs)).